The primary structure comprises 132 residues: Inclusion membrane protein E (132 aa).

The next 2 membrane-spanning stretches (helical) occupy residues 41 to 61 and 66 to 86; these read LGVVCSIICLALGIAAAAVGV and FALGLGIIAILLGIVLFATSA.

The protein localises to the secreted. It localises to the host vacuole. It is found in the host pathogen-containing vacuole. The protein resides in the host pathogen-containing vacuole membrane. In terms of biological role, inclusion membrane protein probably involved in early modification events of the chlamydial inclusion. This is Inclusion membrane protein E from Chlamydia trachomatis serovar L2 (strain ATCC VR-902B / DSM 19102 / 434/Bu).